The primary structure comprises 68 residues: Small ribosomal subunit protein bS21 (68 aa).

It belongs to the bacterial ribosomal protein bS21 family.

The chain is Small ribosomal subunit protein bS21 from Ruegeria sp. (strain TM1040) (Silicibacter sp.).